A 320-amino-acid chain; its full sequence is Small ribosomal subunit protein uS2 (320 aa).

Over residues 1 to 22 (MADETTTDTPDVQDEDAPDEDA) the composition is skewed to acidic residues. The segment at 1–83 (MADETTTDTP…SSSEEETSHR (83 aa)) is disordered. Residues 27 to 41 (DDTASDSTGEAAAAD) show a composition bias toward low complexity. 2 stretches are compositionally biased toward acidic residues: residues 42 to 57 (TDAD…EDAP) and 65 to 78 (DDGD…SSEE).

It belongs to the universal ribosomal protein uS2 family.

The sequence is that of Small ribosomal subunit protein uS2 from Salinibacter ruber (strain DSM 13855 / M31).